The primary structure comprises 157 residues: Peptide methionine sulfoxide reductase MsrA (157 aa).

The active site involves Cys-10.

The protein belongs to the MsrA Met sulfoxide reductase family.

The catalysed reaction is L-methionyl-[protein] + [thioredoxin]-disulfide + H2O = L-methionyl-(S)-S-oxide-[protein] + [thioredoxin]-dithiol. It catalyses the reaction [thioredoxin]-disulfide + L-methionine + H2O = L-methionine (S)-S-oxide + [thioredoxin]-dithiol. Has an important function as a repair enzyme for proteins that have been inactivated by oxidation. Catalyzes the reversible oxidation-reduction of methionine sulfoxide in proteins to methionine. The protein is Peptide methionine sulfoxide reductase MsrA of Clostridium perfringens (strain SM101 / Type A).